The following is a 656-amino-acid chain: Methylenetetrahydrofolate reductase (NADPH) (656 aa).

Positions 1 to 12 (MVNEARGNSSLN) are enriched in polar residues. The interval 1 to 44 (MVNEARGNSSLNPCLEGSASSGSESSKDSSRCSTPGLDPERHER) is disordered. Residues Ser9, Ser10, Ser18, Ser20, Ser21, Ser23, Ser25, Ser26, Ser29, and Ser30 each carry the phosphoserine modification. A Phosphothreonine modification is found at Thr34. Catalysis depends on Glu63, which acts as the Proton donor/acceptor. Residue 63–68 (EFFPPR) participates in NAD(+) binding. Tyr90 carries the post-translational modification Phosphotyrosine. Thr94 bears the Phosphothreonine mark. 94–95 (TW) is a binding site for NAD(+). 94 to 95 (TW) serves as a coordination point for FAD. At Ser103 the chain carries Phosphoserine. FAD contacts are provided by residues His127, 157–159 (RGD), 174–175 (YA), Tyr197, 201–204 (HPEA), Asp210, and Lys217. Asp159 is a substrate binding site. The substrate site is built by Gln228, Tyr321, and Arg325. Position 394 is a phosphoserine (Ser394). Position 451 is a phosphothreonine (Thr451). S-adenosyl-L-methionine-binding positions include Asn456, 461-464 (AAET), 481-485 (TINSQ), Thr560, and Thr573.

Belongs to the methylenetetrahydrofolate reductase family. In terms of assembly, homodimer. FAD serves as cofactor. Phosphorylation of an N-terminal serine-rich phosphorylation region increases sensitivity to S-adenosylmethionine and inhibition.

The enzyme catalyses (6S)-5-methyl-5,6,7,8-tetrahydrofolate + NADP(+) = (6R)-5,10-methylene-5,6,7,8-tetrahydrofolate + NADPH + H(+). It participates in one-carbon metabolism; tetrahydrofolate interconversion. Allosterically regulated by S-adenosylmethionine (SAM). In terms of biological role, catalyzes the conversion of 5,10-methylenetetrahydrofolate to 5-methyltetrahydrofolate, a cosubstrate for homocysteine remethylation to methionine. Represents a key regulatory connection between the folate and methionine cycles. This is Methylenetetrahydrofolate reductase (NADPH) from Homo sapiens (Human).